An 885-amino-acid chain; its full sequence is Protein kintoun (885 aa).

6 disordered regions span residues 208–235 (LSKNPTAEEKEPHPLEHMYPKKPEADAG), 371–390 (LSREDSGVELNSNGESPVED), 607–636 (ELQQLHHQKKLNKKQRKRNKKQRSLSESAC), 644–663 (EHHEQPMDTLKLPHRKQRSY), 781–806 (RRLSEGDSADYVEVDSTHGSGDQPAH), and 819–871 (NNNH…MMFE). The span at 213–232 (TAEEKEPHPLEHMYPKKPEA) shows a compositional bias: basic and acidic residues. Serine 376 carries the phosphoserine modification. Residues 612 to 629 (HHQKKLNKKQRKRNKKQR) are compositionally biased toward basic residues. Serine 784 bears the Phosphoserine mark. Positions 824-837 (HVKDNKKQSLHDSG) are enriched in basic and acidic residues. Positions 842 to 855 (NGSINNKNNHSNEN) are enriched in low complexity.

It belongs to the PIH1 family. Kintoun subfamily. In terms of assembly, interacts with Pp1alpha-96A, Pp1-87B, Pp1-13C and flw.

Its subcellular location is the cytoplasm. Required for cytoplasmic pre-assembly of axonemal dyneins, thereby playing a central role in motility in cilia and flagella. Involved in pre-assembly of dynein arm complexes in the cytoplasm before intraflagellar transport loads them for the ciliary compartment. This Drosophila mojavensis (Fruit fly) protein is Protein kintoun.